The sequence spans 185 residues: MSKEVLSKSKEKMEKAEQALTRQLGTIRAGRANASLLDRLSVDYYGAATPVNQMASISVPEARMLLITPYDKTILGEIEKAILKSDLGLTPNNDGSVLRLSIPQLTEERRKELVKEVKKEAEEAKVAVRNIRREANEELKKLEKSGDITEDDLRSYGEDVQKLTDESIKNIDSITKDKEAEILEV.

Belongs to the RRF family.

Its subcellular location is the cytoplasm. Its function is as follows. Responsible for the release of ribosomes from messenger RNA at the termination of protein biosynthesis. May increase the efficiency of translation by recycling ribosomes from one round of translation to another. In Listeria monocytogenes serotype 4a (strain HCC23), this protein is Ribosome-recycling factor.